Here is a 358-residue protein sequence, read N- to C-terminus: 3-dehydroquinate synthase (358 aa).

Residues 105–109, 129–130, lysine 142, lysine 151, and 169–172 contribute to the NAD(+) site; these read GVVGD, TT, and TLKT. Zn(2+)-binding residues include glutamate 184, histidine 245, and histidine 262.

It belongs to the sugar phosphate cyclases superfamily. Dehydroquinate synthase family. NAD(+) is required as a cofactor. The cofactor is Co(2+). Zn(2+) serves as cofactor.

The protein localises to the cytoplasm. The enzyme catalyses 7-phospho-2-dehydro-3-deoxy-D-arabino-heptonate = 3-dehydroquinate + phosphate. Its pathway is metabolic intermediate biosynthesis; chorismate biosynthesis; chorismate from D-erythrose 4-phosphate and phosphoenolpyruvate: step 2/7. Its function is as follows. Catalyzes the conversion of 3-deoxy-D-arabino-heptulosonate 7-phosphate (DAHP) to dehydroquinate (DHQ). The chain is 3-dehydroquinate synthase from Enterococcus faecalis (strain ATCC 47077 / OG1RF).